Consider the following 88-residue polypeptide: uncharacterized protein (88 aa).

A run of 2 helical transmembrane segments spans residues Ala-5–Val-25 and Cys-36–Phe-56.

It is found in the membrane. This is an uncharacterized protein from Saccharomyces cerevisiae (strain ATCC 204508 / S288c) (Baker's yeast).